We begin with the raw amino-acid sequence, 188 residues long: Translocon-associated protein subunit beta (188 aa).

Positions 1-15 (MKFSLFALLFVVVSC) are cleaved as a signal peptide. Topologically, residues 16-151 (VDVGTQTRDA…EYDRRFAPKY (136 aa)) are lumenal. N-linked (GlcNAc...) asparagine glycans are attached at residues Asn93 and Asn109. The chain crosses the membrane as a helical span at residues 152–172 (TYFLVFFLIVAPTTLGSFLLF). The Cytoplasmic segment spans residues 173-188 (QQSKARFPNVIKKKST).

The protein belongs to the TRAP-beta family. As to quaternary structure, heterotetramer of TRAP-alpha, TRAP-beta, TRAP-delta and TRAP-gamma.

It is found in the endoplasmic reticulum membrane. In terms of biological role, TRAP proteins are part of a complex whose function is to bind calcium to the ER membrane and thereby regulate the retention of ER resident proteins. The polypeptide is Translocon-associated protein subunit beta (Caenorhabditis elegans).